Here is a 346-residue protein sequence, read N- to C-terminus: [LysW]-lysine/[LysW]-ornithine hydrolase (346 aa).

His68 provides a ligand contact to Zn(2+). Residue Asp70 is part of the active site. Asp92 serves as a coordination point for Zn(2+). Glu122 functions as the Proton acceptor in the catalytic mechanism. Glu123, Glu146, and His317 together coordinate Zn(2+).

This sequence belongs to the peptidase M20A family. LysK subfamily. The cofactor is Zn(2+). Co(2+) serves as cofactor.

Its subcellular location is the cytoplasm. It carries out the reaction [amino-group carrier protein]-C-terminal-gamma-(L-lysyl)-L-glutamate + H2O = [amino-group carrier protein]-C-terminal-L-glutamate + L-lysine. The enzyme catalyses [amino-group carrier protein]-C-terminal-gamma-(L-ornithyl)-L-glutamate + H2O = [amino-group carrier protein]-C-terminal-L-glutamate + L-ornithine. The protein operates within amino-acid biosynthesis; L-lysine biosynthesis via AAA pathway; L-lysine from L-alpha-aminoadipate (Thermus route): step 5/5. It functions in the pathway amino-acid biosynthesis; L-arginine biosynthesis. Its function is as follows. Catalyzes the release of L-lysine from [LysW]-gamma-L-lysine and the release of L-ornithine from [LysW]-L-ornithine. The sequence is that of [LysW]-lysine/[LysW]-ornithine hydrolase from Saccharolobus islandicus (strain Y.G.57.14 / Yellowstone #1) (Sulfolobus islandicus).